A 315-amino-acid polypeptide reads, in one-letter code: Prephenate dehydratase (315 aa).

Positions 3-190 constitute a Prephenate dehydratase domain; it reads RIAYLGPQGT…ARTRFVLVGR (188 aa). The ACT domain occupies 204 to 281; the sequence is SVALRLPNTP…EDVRYLGSWP (78 aa).

In terms of assembly, homodimer.

It carries out the reaction prephenate + H(+) = 3-phenylpyruvate + CO2 + H2O. It functions in the pathway amino-acid biosynthesis; L-phenylalanine biosynthesis; phenylpyruvate from prephenate: step 1/1. In Mycobacterium sp. (strain JLS), this protein is Prephenate dehydratase (pheA).